The sequence spans 492 residues: V-type proton ATPase subunit B 1 (492 aa).

Belongs to the ATPase alpha/beta chains family. As to quaternary structure, V-ATPase is a heteromultimeric enzyme composed of a peripheral catalytic V1 complex (main components: subunits A, B, C, D, E, and F) attached to an integral membrane V0 proton pore complex (main component: the proteolipid protein).

Functionally, non-catalytic subunit of the peripheral V1 complex of vacuolar ATPase. V-ATPase is responsible for acidifying a variety of intracellular compartments in eukaryotic cells. The chain is V-type proton ATPase subunit B 1 from Acetabularia acetabulum (Mermaid's wine glass).